Consider the following 366-residue polypeptide: Subtilisin-like protease het-Q2 (366 aa).

Positions 1–321 (MSAISHHSLS…RVLMALGEKT (321 aa)) constitute a Peptidase S8 domain. Asp-35 acts as the Charge relay system in catalysis. The segment at 79 to 98 (DFCQPSPPGDRQGPPPQPHS) is disordered. The span at 83-96 (PSPPGDRQGPPPQP) shows a compositional bias: pro residues. Residues His-105 and Ser-266 each act as charge relay system in the active site. A helical transmembrane segment spans residues 261 to 283 (LVSGSSFATPVVVSVAALVLAFV).

It belongs to the peptidase S8 family.

Its subcellular location is the membrane. In terms of biological role, serine protease involved in heterokaryon incompatibility, a process that ensures that during spontaneous vegetative cell fusion, only compatible cells from the same colony survive (non-self-recognition). In P.anserina, the het-q locus exists as 2 incompatible alleles, het-Q1 (AC B2AXJ5) and het-Q2 (this entry). Prevents cell fusion with strains containing the gasdermin-like protein het-Q1 by mediating proteolytic cleavage and maturation of het-Q1 during the allorecognition process, thereby triggering cell death. The sequence is that of Subtilisin-like protease het-Q2 from Podospora anserina (Pleurage anserina).